A 233-amino-acid polypeptide reads, in one-letter code: Leucyl/phenylalanyl-tRNA--protein transferase (233 aa).

This sequence belongs to the L/F-transferase family.

It localises to the cytoplasm. It catalyses the reaction N-terminal L-lysyl-[protein] + L-leucyl-tRNA(Leu) = N-terminal L-leucyl-L-lysyl-[protein] + tRNA(Leu) + H(+). The enzyme catalyses N-terminal L-arginyl-[protein] + L-leucyl-tRNA(Leu) = N-terminal L-leucyl-L-arginyl-[protein] + tRNA(Leu) + H(+). The catalysed reaction is L-phenylalanyl-tRNA(Phe) + an N-terminal L-alpha-aminoacyl-[protein] = an N-terminal L-phenylalanyl-L-alpha-aminoacyl-[protein] + tRNA(Phe). In terms of biological role, functions in the N-end rule pathway of protein degradation where it conjugates Leu, Phe and, less efficiently, Met from aminoacyl-tRNAs to the N-termini of proteins containing an N-terminal arginine or lysine. This chain is Leucyl/phenylalanyl-tRNA--protein transferase, found in Anaeromyxobacter dehalogenans (strain 2CP-1 / ATCC BAA-258).